Here is a 505-residue protein sequence, read N- to C-terminus: ATP synthase subunit alpha, chloroplastic (505 aa).

170 to 177 (GDRQTGKT) is an ATP binding site.

This sequence belongs to the ATPase alpha/beta chains family. F-type ATPases have 2 components, CF(1) - the catalytic core - and CF(0) - the membrane proton channel. CF(1) has five subunits: alpha(3), beta(3), gamma(1), delta(1), epsilon(1). CF(0) has four main subunits: a, b, b' and c.

It is found in the plastid. Its subcellular location is the chloroplast thylakoid membrane. The enzyme catalyses ATP + H2O + 4 H(+)(in) = ADP + phosphate + 5 H(+)(out). Functionally, produces ATP from ADP in the presence of a proton gradient across the membrane. The alpha chain is a regulatory subunit. This chain is ATP synthase subunit alpha, chloroplastic, found in Oenothera biennis (German evening primrose).